A 20-amino-acid polypeptide reads, in one-letter code: Non-specific lipid-transfer protein-like protein (20 aa).

It belongs to the plant LTP family.

This chain is Non-specific lipid-transfer protein-like protein, found in Jatropha curcas (Barbados nut).